Reading from the N-terminus, the 602-residue chain is Sulfite reductase [NADPH] hemoprotein beta-component (602 aa).

The segment at 1–23 is disordered; that stretch reads MDDTKTASPAPARAYETPPAERP. Residues cysteine 458, cysteine 464, cysteine 503, and cysteine 507 each coordinate [4Fe-4S] cluster. Siroheme is bound at residue cysteine 507.

It belongs to the nitrite and sulfite reductase 4Fe-4S domain family. Alpha(8)-beta(8). The alpha component is a flavoprotein, the beta component is a hemoprotein. Siroheme is required as a cofactor. [4Fe-4S] cluster serves as cofactor.

It catalyses the reaction hydrogen sulfide + 3 NADP(+) + 3 H2O = sulfite + 3 NADPH + 4 H(+). The protein operates within sulfur metabolism; hydrogen sulfide biosynthesis; hydrogen sulfide from sulfite (NADPH route): step 1/1. In terms of biological role, component of the sulfite reductase complex that catalyzes the 6-electron reduction of sulfite to sulfide. This is one of several activities required for the biosynthesis of L-cysteine from sulfate. The chain is Sulfite reductase [NADPH] hemoprotein beta-component from Methylobacterium sp. (strain 4-46).